The chain runs to 245 residues: Orotidine 5'-phosphate decarboxylase (245 aa).

Substrate is bound by residues D22, K44, 71–80, T131, R192, Q201, G221, and R222; that span reads DLKFHDIPNT. The Proton donor role is filled by K73.

Belongs to the OMP decarboxylase family. Type 1 subfamily. In terms of assembly, homodimer.

The enzyme catalyses orotidine 5'-phosphate + H(+) = UMP + CO2. It functions in the pathway pyrimidine metabolism; UMP biosynthesis via de novo pathway; UMP from orotate: step 2/2. Functionally, catalyzes the decarboxylation of orotidine 5'-monophosphate (OMP) to uridine 5'-monophosphate (UMP). This chain is Orotidine 5'-phosphate decarboxylase, found in Escherichia coli O45:K1 (strain S88 / ExPEC).